The following is a 113-amino-acid chain: Dolichyl-diphosphooligosaccharide--protein glycosyltransferase subunit DAD1 (113 aa).

Residue S2 is modified to N-acetylserine. Over 2 to 30 the chain is Cytoplasmic; that stretch reads SASVLSVISRFLEEYLSATPQRLKLLDAY. A helical membrane pass occupies residues 31 to 51; sequence LLYILLTGALQFGYCLLVGTF. Residue P52 is a topological domain, lumenal. Residues 53–73 form a helical membrane-spanning segment; the sequence is FNSFLSGFISCVGSFILAVCL. Topologically, residues 74-92 are cytoplasmic; sequence RIQINPQNKADFQGISPER. A helical transmembrane segment spans residues 93-113; that stretch reads AFADFLFASTILHLVVMNFVG.

This sequence belongs to the DAD/OST2 family. Component of the oligosaccharyltransferase (OST) complex. OST exists in two different complex forms which contain common core subunits RPN1, RPN2, OST48, OST4, DAD1 and TMEM258, either STT3A or STT3B as catalytic subunits, and form-specific accessory subunits. STT3A complex assembly occurs through the formation of 3 subcomplexes. Subcomplex 1 contains RPN1 and TMEM258, subcomplex 2 contains the STT3A-specific subunits STT3A, DC2/OSTC, and KCP2 as well as the core subunit OST4, and subcomplex 3 contains RPN2, DAD1, and OST48. The STT3A complex can form stable complexes with the Sec61 complex or with both the Sec61 and TRAP complexes.

Its subcellular location is the endoplasmic reticulum membrane. It participates in protein modification; protein glycosylation. In terms of biological role, subunit of the oligosaccharyl transferase (OST) complex that catalyzes the initial transfer of a defined glycan (Glc(3)Man(9)GlcNAc(2) in eukaryotes) from the lipid carrier dolichol-pyrophosphate to an asparagine residue within an Asn-X-Ser/Thr consensus motif in nascent polypeptide chains, the first step in protein N-glycosylation. N-glycosylation occurs cotranslationally and the complex associates with the Sec61 complex at the channel-forming translocon complex that mediates protein translocation across the endoplasmic reticulum (ER). All subunits are required for a maximal enzyme activity. In Bos taurus (Bovine), this protein is Dolichyl-diphosphooligosaccharide--protein glycosyltransferase subunit DAD1.